The following is a 101-amino-acid chain: NAD(P)H-quinone oxidoreductase subunit 4L, chloroplastic (101 aa).

3 helical membrane passes run 2–22 (ILEH…YGLI), 32–52 (MCLE…SDFF), and 61–81 (IFCI…LAIV).

It belongs to the complex I subunit 4L family. As to quaternary structure, NDH is composed of at least 16 different subunits, 5 of which are encoded in the nucleus.

It is found in the plastid. It localises to the chloroplast thylakoid membrane. The catalysed reaction is a plastoquinone + NADH + (n+1) H(+)(in) = a plastoquinol + NAD(+) + n H(+)(out). It carries out the reaction a plastoquinone + NADPH + (n+1) H(+)(in) = a plastoquinol + NADP(+) + n H(+)(out). In terms of biological role, NDH shuttles electrons from NAD(P)H:plastoquinone, via FMN and iron-sulfur (Fe-S) centers, to quinones in the photosynthetic chain and possibly in a chloroplast respiratory chain. The immediate electron acceptor for the enzyme in this species is believed to be plastoquinone. Couples the redox reaction to proton translocation, and thus conserves the redox energy in a proton gradient. The polypeptide is NAD(P)H-quinone oxidoreductase subunit 4L, chloroplastic (Lepidium virginicum (Virginia pepperweed)).